The following is a 529-amino-acid chain: 2-(3-amino-3-carboxypropyl)histidine synthase subunit 2-2 (529 aa).

[4Fe-4S] cluster contacts are provided by C130, C151, and C366.

This sequence belongs to the DPH1/DPH2 family. DPH2 subfamily. As to quaternary structure, component of the 2-(3-amino-3-carboxypropyl)histidine synthase complex composed of DPH1, DPH2, DPH3 and a NADH-dependent reductase, predominantly CBR1. [4Fe-4S] cluster is required as a cofactor.

Its subcellular location is the cytoplasm. It participates in protein modification; peptidyl-diphthamide biosynthesis. Functionally, required for the first step of diphthamide biosynthesis, a post-translational modification of histidine which occurs in elongation factor 2. DPH1 and DPH2 transfer a 3-amino-3-carboxypropyl (ACP) group from S-adenosyl-L-methionine (SAM) to a histidine residue, the reaction is assisted by a reduction system comprising DPH3 and a NADH-dependent reductase, predominantly CBR1. Facilitates the reduction of the catalytic iron-sulfur cluster found in the DPH1 subunit. The protein is 2-(3-amino-3-carboxypropyl)histidine synthase subunit 2-2 of Candida albicans (strain SC5314 / ATCC MYA-2876) (Yeast).